The sequence spans 248 residues: Pulmonary surfactant-associated protein A (248 aa).

The N-terminal stretch at Met1–Gly17 is a signal peptide. In terms of domain architecture, Collagen-like spans Gly28 to Pro100. Positions Ser29–Leu103 are disordered. Basic and acidic residues predominate over residues Pro42–Lys51. Positions Pro54–Gly65 are enriched in pro residues. The segment covering Leu69–Pro82 has biased composition (low complexity). Residues Glu84–Glu93 show a composition bias toward basic and acidic residues. The C-type lectin domain occupies Leu127–Glu247. 2 cysteine pairs are disulfide-bonded: Cys155–Cys246 and Cys224–Cys238. N-linked (GlcNAc...) asparagine glycosylation is present at Asn207. The Ca(2+) site is built by Glu215, Arg217, Asn234, and Asp235.

This sequence belongs to the SFTPA family. In terms of assembly, oligomeric complex of 6 set of homotrimers.

Its subcellular location is the secreted. It localises to the extracellular space. The protein localises to the extracellular matrix. The protein resides in the surface film. Functionally, in presence of calcium ions, it binds to surfactant phospholipids and contributes to lower the surface tension at the air-liquid interface in the alveoli of the mammalian lung and is essential for normal respiration. Enhances the expression of MYO18A/SP-R210 on alveolar macrophages. This is Pulmonary surfactant-associated protein A (SFTPA1) from Ovis aries (Sheep).